We begin with the raw amino-acid sequence, 947 residues long: DNA mismatch repair protein MutS 2 (947 aa).

Positions 623 to 643 (IPNDTHLGSGPVPASRDGSDD) are disordered. Position 659–666 (659–666 (GPNMSGKS)) interacts with ATP. The tract at residues 841-916 (AETADTGVEA…GAAAEDELPE (76 aa)) is disordered.

The protein belongs to the DNA mismatch repair MutS family.

This protein is involved in the repair of mismatches in DNA. It is possible that it carries out the mismatch recognition step. This protein has a weak ATPase activity. This is DNA mismatch repair protein MutS 2 from Haloarcula marismortui (strain ATCC 43049 / DSM 3752 / JCM 8966 / VKM B-1809) (Halobacterium marismortui).